Consider the following 538-residue polypeptide: MGNPRGRRTNGSIKTSKGTQRGTVSNLLSDQPLAARPKVSIVSNDDSQDSSDGGAFTTPSTTESTLKTTINGTDSTERNMSRKPSSPMAPAFMVSAPGKVIVYGEHAVVHGKAAMAAAISLRSYLLVTTLSKSQRTITMNFRDIGLDHTWNIDELPWDVFHHPSKKKFYYDLVTSLDPELVAAIQPHADAVSPDKPEDVRKIHRRSASAFLYLFLSLGSSQNPGAIYTLRSTIPIGAGLGSSASVCVCLSAALLLQIRTLAGPHPDQPPDEAEVQIERINRWAFVGEMCTHGNPSGVDNTVSAGGKAVVFRREDYSKPPTVTPLLNFPELPLLLVDTRQSRSTAVEVAKVGKLKDEYPVVTDSILEAIDQVTLAAQQKIQEISTNGISYRTLEDLGTLIRINHGFLVSLGVSHPRLERIRELVDYADIGWTKLTGAGGGGCAITLLRPDIKEEAVRELEEKLSAEGFVKYETTLGGDGIGVLWPAVLRNGTDEEGGEEIDQQKFENAVGTEGIERLVGVGVQEKREGWKFWKRSPRFS.

A disordered region spans residues 1 to 87 (MGNPRGRRTN…RNMSRKPSSP (87 aa)). The span at 9–29 (TNGSIKTSKGTQRGTVSNLLS) shows a compositional bias: polar residues. The segment covering 57–69 (TTPSTTESTLKTT) has biased composition (low complexity). ATP-binding positions include lysine 99, serine 231, and 236–242 (GAGLGSS). Mg(2+) is bound by residues serine 242 and glutamate 287. The Proton acceptor role is filled by aspartate 298.

This sequence belongs to the GHMP kinase family. Mevalonate kinase subfamily. Homodimer. The cofactor is Mg(2+).

It is found in the cytoplasm. The protein resides in the cytosol. The catalysed reaction is (R)-mevalonate + ATP = (R)-5-phosphomevalonate + ADP + H(+). Its pathway is isoprenoid biosynthesis; isopentenyl diphosphate biosynthesis via mevalonate pathway; isopentenyl diphosphate from (R)-mevalonate: step 1/3. Functionally, mevalonate kinase; part of the second module of ergosterol biosynthesis pathway that includes the middle steps of the pathway. Erg12 converts mevalonate into 5-phosphomevalonate. The second module is carried out in the vacuole and involves the formation of farnesyl diphosphate, which is also an important intermediate in the biosynthesis of ubiquinone, dolichol, heme and prenylated proteins. Activity by the mevalonate kinase erg12 (AFUA_4G07780) first converts mevalonate into 5-phosphomevalonate. 5-phosphomevalonate is then further converted to 5-diphosphomevalonate by the phosphomevalonate kinase erg8 (AFUA_5G10680). The diphosphomevalonate decarboxylase mvd1 (AFUA_4G07130) then produces isopentenyl diphosphate. The isopentenyl-diphosphate delta-isomerase idi1 (AFUA_6G11160) then catalyzes the 1,3-allylic rearrangement of the homoallylic substrate isopentenyl (IPP) to its highly electrophilic allylic isomer, dimethylallyl diphosphate (DMAPP). Finally the farnesyl diphosphate synthase erg20 (AFUA_5G02450) catalyzes the sequential condensation of isopentenyl pyrophosphate with dimethylallyl pyrophosphate, and then with the resultant geranylpyrophosphate to the ultimate product farnesyl pyrophosphate. In Aspergillus fumigatus (strain ATCC MYA-4609 / CBS 101355 / FGSC A1100 / Af293) (Neosartorya fumigata), this protein is Mevalonate kinase erg12.